A 129-amino-acid chain; its full sequence is Glycine cleavage system H protein (129 aa).

Residues 24-106 (SYTVGITEHA…YGEGWFFRVM (83 aa)) form the Lipoyl-binding domain. Residue Lys65 is modified to N6-lipoyllysine.

This sequence belongs to the GcvH family. The glycine cleavage system is composed of four proteins: P, T, L and H. It depends on (R)-lipoate as a cofactor.

In terms of biological role, the glycine cleavage system catalyzes the degradation of glycine. The H protein shuttles the methylamine group of glycine from the P protein to the T protein. This is Glycine cleavage system H protein from Shewanella baltica (strain OS155 / ATCC BAA-1091).